We begin with the raw amino-acid sequence, 378 residues long: Spermidine/putrescine import ATP-binding protein PotA (378 aa).

The 231-residue stretch at 18 to 248 folds into the ABC transporter domain; the sequence is VQLAGIRKCF…PKNLFVAGFI (231 aa). 50 to 57 lines the ATP pocket; the sequence is GPSGCGKT.

Belongs to the ABC transporter superfamily. Spermidine/putrescine importer (TC 3.A.1.11.1) family. In terms of assembly, the complex is composed of two ATP-binding proteins (PotA), two transmembrane proteins (PotB and PotC) and a solute-binding protein (PotD).

The protein localises to the cell inner membrane. It catalyses the reaction ATP + H2O + polyamine-[polyamine-binding protein]Side 1 = ADP + phosphate + polyamineSide 2 + [polyamine-binding protein]Side 1.. In terms of biological role, part of the ABC transporter complex PotABCD involved in spermidine/putrescine import. Responsible for energy coupling to the transport system. This chain is Spermidine/putrescine import ATP-binding protein PotA, found in Shigella flexneri.